The sequence spans 371 residues: Flagellar P-ring protein (371 aa).

The signal sequence occupies residues 1–24 (MSIRVLLFSIFTGFLLAAAGPALA). Over residues 301 to 321 (PQPFSSGTTATQPQTDISAQK) the composition is skewed to polar residues. Residues 301–322 (PQPFSSGTTATQPQTDISAQKT) are disordered.

This sequence belongs to the FlgI family. The basal body constitutes a major portion of the flagellar organelle and consists of four rings (L,P,S, and M) mounted on a central rod.

The protein resides in the periplasm. Its subcellular location is the bacterial flagellum basal body. Assembles around the rod to form the L-ring and probably protects the motor/basal body from shearing forces during rotation. In Allorhizobium ampelinum (strain ATCC BAA-846 / DSM 112012 / S4) (Agrobacterium vitis (strain S4)), this protein is Flagellar P-ring protein.